A 277-amino-acid chain; its full sequence is Uridine phosphorylase (277 aa).

It belongs to the PNP/UDP phosphorylase family.

The protein resides in the cytoplasm. It carries out the reaction uridine + phosphate = alpha-D-ribose 1-phosphate + uracil. It participates in pyrimidine metabolism; UMP biosynthesis via salvage pathway; uracil from uridine (phosphorylase route): step 1/1. Its function is as follows. Catalyzes the reversible phosphorylytic cleavage of uridine to uracil and ribose-1-phosphate. The polypeptide is Uridine phosphorylase (Thermococcus kodakarensis (strain ATCC BAA-918 / JCM 12380 / KOD1) (Pyrococcus kodakaraensis (strain KOD1))).